The sequence spans 240 residues: Ribonuclease HII (240 aa).

In terms of domain architecture, RNase H type-2 spans 21 to 210 (GLVAGVDEAG…VAAAVQRTVV (190 aa)). A divalent metal cation-binding residues include D27, E28, and D119.

It belongs to the RNase HII family. Requires Mn(2+) as cofactor. Mg(2+) serves as cofactor.

It localises to the cytoplasm. The catalysed reaction is Endonucleolytic cleavage to 5'-phosphomonoester.. Functionally, endonuclease that specifically degrades the RNA of RNA-DNA hybrids. The protein is Ribonuclease HII of Paracidovorax citrulli (strain AAC00-1) (Acidovorax citrulli).